The sequence spans 222 residues: Triosephosphate isomerase (222 aa).

10-12 (NCK) is a binding site for substrate. Residue histidine 93 is the Electrophile of the active site. The active-site Proton acceptor is the glutamate 141. Substrate contacts are provided by residues isoleucine 146, glycine 180, and 201–202 (AS).

Belongs to the triosephosphate isomerase family. As to quaternary structure, homotetramer; dimer of dimers.

The protein localises to the cytoplasm. It carries out the reaction D-glyceraldehyde 3-phosphate = dihydroxyacetone phosphate. It participates in carbohydrate biosynthesis; gluconeogenesis. Its pathway is carbohydrate degradation; glycolysis; D-glyceraldehyde 3-phosphate from glycerone phosphate: step 1/1. Its function is as follows. Involved in the gluconeogenesis. Catalyzes stereospecifically the conversion of dihydroxyacetone phosphate (DHAP) to D-glyceraldehyde-3-phosphate (G3P). This Cenarchaeum symbiosum (strain A) protein is Triosephosphate isomerase.